The primary structure comprises 154 residues: Interleukin-7 (154 aa).

Residues 1-25 (MFHVSFRYIFGIPPLILVLLPVTSS) form the signal peptide. 3 cysteine pairs are disulfide-bonded: cysteine 27–cysteine 145, cysteine 58–cysteine 133, and cysteine 71–cysteine 116. N-linked (GlcNAc...) asparagine glycosylation is found at asparagine 94 and asparagine 115.

Belongs to the IL-7/IL-9 family. Interacts with IL7R and CSF2RG. In terms of processing, three disulfide bonds are present.

The protein resides in the secreted. Hematopoietic cytokine that plays an essential role in the development, expansion, and survival of naive and memory T-cells and B-cells thereby regulating the number of mature lymphocytes and maintaining lymphoid homeostasis. Mechanistically, exerts its biological effects through a receptor composed of IL7RA subunit and the cytokine receptor common subunit gamma/CSF2RG. Binding to the receptor leads to activation of various kinases including JAK1 or JAK3 depending on the cell type and subsequently propagation of signals through activation of several downstream signaling pathways including the PI3K/Akt/mTOR or the JAK-STAT5. This chain is Interleukin-7 (Il7), found in Rattus norvegicus (Rat).